Consider the following 78-residue polypeptide: Biotin synthase auxiliary protein (78 aa).

Belongs to the BsaP family. Iron-sulfur cluster serves as cofactor.

In terms of biological role, required for the activity of the biotin synthase BioB. The polypeptide is Biotin synthase auxiliary protein (Mycolicibacterium smegmatis (strain ATCC 700084 / mc(2)155) (Mycobacterium smegmatis)).